The chain runs to 339 residues: 7,8-didemethyl-8-hydroxy-5-deazariboflavin synthase (339 aa).

In terms of domain architecture, Radical SAM core spans 13-258 (ITYSKNIFIP…RDTDVSIQVP (246 aa)). [4Fe-4S] cluster contacts are provided by cysteine 27, cysteine 31, and cysteine 34.

The protein belongs to the radical SAM superfamily. CofG family. As to quaternary structure, consists of two subunits, CofG and CofH. [4Fe-4S] cluster is required as a cofactor.

The catalysed reaction is 5-amino-5-(4-hydroxybenzyl)-6-(D-ribitylimino)-5,6-dihydrouracil + S-adenosyl-L-methionine = 7,8-didemethyl-8-hydroxy-5-deazariboflavin + 5'-deoxyadenosine + L-methionine + NH4(+) + H(+). It participates in cofactor biosynthesis; coenzyme F0 biosynthesis. Catalyzes the radical-mediated synthesis of 7,8-didemethyl-8-hydroxy-5-deazariboflavin from 5-amino-5-(4-hydroxybenzyl)-6-(D-ribitylimino)-5,6-dihydrouracil. The protein is 7,8-didemethyl-8-hydroxy-5-deazariboflavin synthase of Methanobrevibacter smithii (strain ATCC 35061 / DSM 861 / OCM 144 / PS).